Consider the following 101-residue polypeptide: Osteocalcin (101 aa).

Residues 1 to 18 (MKLAIVLLLLGLAVLCLG) form the signal peptide. Positions 19 to 52 (GKDSQHSASAGDSRSSEAFISRQDSANFARRHKR) are excised as a propeptide. The 47-residue stretch at 53-99 (SYRYNVARGAAVTSPLESQREVCELNPDCDELADHIGFQEAYRRFYG) folds into the Gla domain. Ca(2+) contacts are provided by Glu69, Glu73, Glu76, and Asp82. Glu69, Glu73, and Glu76 each carry 4-carboxyglutamate. Cys75 and Cys81 are joined by a disulfide.

Belongs to the osteocalcin/matrix Gla protein family. Post-translationally, gamma-carboxyglutamate residues are formed by vitamin K dependent carboxylation by GGCX. These residues are essential for the binding of calcium.

The protein localises to the secreted. Functionally, the carboxylated form is one of the main organic components of the bone matrix, which constitutes 1-2% of the total bone protein. The carboxylated form binds strongly to apatite and calcium. The chain is Osteocalcin (bglap) from Xenopus tropicalis (Western clawed frog).